The sequence spans 578 residues: Poly(A) RNA polymerase cid13 (578 aa).

Mg(2+)-binding residues include Asp110 and Asp112. A PAP-associated domain is found at 275 to 330 (SLGILFVEFFRFFGYLFDYEHFVLSIRHGTFLSKRAKGWQFQLNNFLCVEEPFHTS). The tract at residues 495-565 (SHHFDERHGG…SEVVSPVSLH (71 aa)) is disordered. Residues 496 to 510 (HHFDERHGGDRHEKN) show a composition bias toward basic and acidic residues. Positions 516 to 527 (RYSRNKFHKKKQ) are enriched in basic residues. Residues 547–565 (NSPPSNSSSSEVVSPVSLH) show a composition bias toward low complexity.

Belongs to the DNA polymerase type-B-like family. In terms of assembly, interacts with pab1. Mg(2+) serves as cofactor. Mn(2+) is required as a cofactor.

It is found in the cytoplasm. It localises to the nucleus. The enzyme catalyses RNA(n) + ATP = RNA(n)-3'-adenine ribonucleotide + diphosphate. Functionally, polymerase that creates the 3' poly(A) tail of suc22 mRNA. The chain is Poly(A) RNA polymerase cid13 (cid13) from Schizosaccharomyces pombe (strain 972 / ATCC 24843) (Fission yeast).